Reading from the N-terminus, the 459-residue chain is UDP-N-acetylmuramate--L-alanine ligase (459 aa).

118–124 (GTHGKTT) contacts ATP.

It belongs to the MurCDEF family.

It localises to the cytoplasm. It catalyses the reaction UDP-N-acetyl-alpha-D-muramate + L-alanine + ATP = UDP-N-acetyl-alpha-D-muramoyl-L-alanine + ADP + phosphate + H(+). It functions in the pathway cell wall biogenesis; peptidoglycan biosynthesis. Functionally, cell wall formation. The sequence is that of UDP-N-acetylmuramate--L-alanine ligase from Agathobacter rectalis (strain ATCC 33656 / DSM 3377 / JCM 17463 / KCTC 5835 / VPI 0990) (Eubacterium rectale).